The primary structure comprises 277 residues: MGNGVQPLDPVAIQIGSISVKWYGVIIASAVVIALLLALSEANKRKMDKEIIVDLLIWAIPISIISARIYYVIFEWDFYKNNLGEIVKIWHGGIAIYGALIGAVLTAVIFSRIKKISFWKLADVVAPSLIIAQAIGRWGNFMNQEAHGAETTRAFLEGLHLPEFIINQMYIDGAYYQPTFLYESLWNVLGFIVLLIIRRTKIRSGELFLSYVIWYSFGRFFIEGMRTDSLMWGDFRVSQVLSLLLIVLSIGLIIYRRVKMNPPYYMEDKLGKVAKKK.

A run of 4 helical transmembrane segments spans residues 18-38 (ISVK…LLLA), 51-71 (IIVD…RIYY), 89-109 (IWHG…TAVI), and 116-136 (ISFW…QAIG). Residue Arg-137 coordinates a 1,2-diacyl-sn-glycero-3-phospho-(1'-sn-glycerol). The next 3 membrane-spanning stretches (helical) occupy residues 177–197 (QPTF…LLII), 205–225 (GELF…IEGM), and 235–255 (FRVS…LIIY).

Belongs to the Lgt family.

It localises to the cell membrane. It catalyses the reaction L-cysteinyl-[prolipoprotein] + a 1,2-diacyl-sn-glycero-3-phospho-(1'-sn-glycerol) = an S-1,2-diacyl-sn-glyceryl-L-cysteinyl-[prolipoprotein] + sn-glycerol 1-phosphate + H(+). It participates in protein modification; lipoprotein biosynthesis (diacylglyceryl transfer). Catalyzes the transfer of the diacylglyceryl group from phosphatidylglycerol to the sulfhydryl group of the N-terminal cysteine of a prolipoprotein, the first step in the formation of mature lipoproteins. The chain is Phosphatidylglycerol--prolipoprotein diacylglyceryl transferase from Listeria innocua serovar 6a (strain ATCC BAA-680 / CLIP 11262).